A 251-amino-acid polypeptide reads, in one-letter code: MHKVVLLRHGESLWNMENRFTGWTDVDLSPKGIEEARESGKTLKAEGYTFDCAFTSVLKRAIRTLWIVLDELDRMWIPVYKSWRLNERHYGALQGLNKAETAKKYGEEQVKIWRRSADVRPPALEKDDPRYPGFDPRYADLSEEEIPLTENLIDTINRVIPYWESTIAPTIKSGKKVLIVAHGNSLRGLVKYLDNLSKQEIMELNIPTGIPLVYELDDDLKPIRHYYLADEEKVKEKKELVENQGKIQGNS.

Residues 8 to 15 (RHGESLWN), 21 to 22 (TG), Arg-60, 87 to 90 (ERHY), Lys-98, 114 to 115 (RR), and 183 to 184 (GN) each bind substrate. His-9 functions as the Tele-phosphohistidine intermediate in the catalytic mechanism. The active-site Proton donor/acceptor is the Glu-87.

The protein belongs to the phosphoglycerate mutase family. BPG-dependent PGAM subfamily.

It catalyses the reaction (2R)-2-phosphoglycerate = (2R)-3-phosphoglycerate. Its pathway is carbohydrate degradation; glycolysis; pyruvate from D-glyceraldehyde 3-phosphate: step 3/5. Functionally, catalyzes the interconversion of 2-phosphoglycerate and 3-phosphoglycerate. The polypeptide is 2,3-bisphosphoglycerate-dependent phosphoglycerate mutase (Thermoanaerobacter sp. (strain X514)).